A 259-amino-acid polypeptide reads, in one-letter code: Undecaprenyl-diphosphatase 3 (259 aa).

A run of 8 helical transmembrane segments spans residues 1-21 (MNWL…FLPI), 39-59 (AGLF…FIYY), 71-91 (FSKL…IGLL), 99-119 (ISKT…FLYM), 133-153 (ITYK…FPAI), 174-194 (AYFS…LQFV), 208-228 (SLIV…SWMI), and 239-259 (FAYY…TDVF).

It belongs to the UppP family.

The protein localises to the cell membrane. The catalysed reaction is di-trans,octa-cis-undecaprenyl diphosphate + H2O = di-trans,octa-cis-undecaprenyl phosphate + phosphate + H(+). Its function is as follows. Catalyzes the dephosphorylation of undecaprenyl diphosphate (UPP). Confers resistance to bacitracin. The protein is Undecaprenyl-diphosphatase 3 of Bacillus cereus (strain ATCC 14579 / DSM 31 / CCUG 7414 / JCM 2152 / NBRC 15305 / NCIMB 9373 / NCTC 2599 / NRRL B-3711).